The primary structure comprises 138 residues: Large ribosomal subunit protein uL16 (138 aa).

A compositionally biased stretch (basic residues) spans 1-16; the sequence is MLIPKRVKFRRQHRPN. The disordered stretch occupies residues 1 to 25; the sequence is MLIPKRVKFRRQHRPNRSGMSKGGN.

It belongs to the universal ribosomal protein uL16 family. In terms of assembly, part of the 50S ribosomal subunit.

Binds 23S rRNA and is also seen to make contacts with the A and possibly P site tRNAs. The polypeptide is Large ribosomal subunit protein uL16 (Corynebacterium urealyticum (strain ATCC 43042 / DSM 7109)).